Reading from the N-terminus, the 146-residue chain is Prepilin peptidase-dependent protein D (146 aa).

The propeptide at 1–6 is leader sequence; the sequence is MDKQRG. Position 7 is an N-methylphenylalanine (F7). The chain crosses the membrane as a helical span at residues 7–27; the sequence is FTLIELMVVIGIIAILSAIGI.

It belongs to the N-Me-Phe pilin family.

Its subcellular location is the fimbrium. It is found in the membrane. Major component of the type IV pilus (T4P) that plays a role in cell adhesion and motility. Not produced when grown under standard laboratory conditions. The sequence is that of Prepilin peptidase-dependent protein D (ppdD) from Escherichia coli (strain K12).